The primary structure comprises 218 residues: Uracil-DNA glycosylase (218 aa).

Asp59 (proton acceptor) is an active-site residue.

The protein belongs to the uracil-DNA glycosylase (UDG) superfamily. UNG family.

It localises to the cytoplasm. The enzyme catalyses Hydrolyzes single-stranded DNA or mismatched double-stranded DNA and polynucleotides, releasing free uracil.. Its function is as follows. Excises uracil residues from the DNA which can arise as a result of misincorporation of dUMP residues by DNA polymerase or due to deamination of cytosine. The polypeptide is Uracil-DNA glycosylase (Staphylococcus aureus (strain bovine RF122 / ET3-1)).